The chain runs to 557 residues: Ribonuclease J 2 (557 aa).

Zn(2+) contacts are provided by histidine 76, histidine 78, histidine 144, and glutamate 166. Histidine 366–histidine 370 contributes to the substrate binding site.

Belongs to the metallo-beta-lactamase superfamily. RNA-metabolizing metallo-beta-lactamase-like family. Bacterial RNase J subfamily. Homodimer, may be a subunit of the RNA degradosome. Zn(2+) is required as a cofactor.

The protein resides in the cytoplasm. Its function is as follows. An RNase that has 5'-3' exonuclease and possibly endoonuclease activity. Involved in maturation of rRNA and in some organisms also mRNA maturation and/or decay. This Staphylococcus aureus (strain MRSA252) protein is Ribonuclease J 2.